The primary structure comprises 70 residues: Small ribosomal subunit protein bS21 (70 aa).

This sequence belongs to the bacterial ribosomal protein bS21 family.

The protein is Small ribosomal subunit protein bS21 of Bordetella avium (strain 197N).